A 418-amino-acid polypeptide reads, in one-letter code: Tyrosine--tRNA ligase 1 (418 aa).

Tyr-34 lines the L-tyrosine pocket. A 'HIGH' region motif is present at residues 39-48 (PTGDSMHIGH). L-tyrosine contacts are provided by Tyr-166 and Gln-170. Residues 228–232 (KFGKT) carry the 'KMSKS' region motif. Position 231 (Lys-231) interacts with ATP. In terms of domain architecture, S4 RNA-binding spans 350–416 (KNIVDWLVDT…GKKNYFLAKV (67 aa)).

The protein belongs to the class-I aminoacyl-tRNA synthetase family. TyrS type 1 subfamily. In terms of assembly, homodimer.

The protein localises to the cytoplasm. It carries out the reaction tRNA(Tyr) + L-tyrosine + ATP = L-tyrosyl-tRNA(Tyr) + AMP + diphosphate + H(+). Catalyzes the attachment of tyrosine to tRNA(Tyr) in a two-step reaction: tyrosine is first activated by ATP to form Tyr-AMP and then transferred to the acceptor end of tRNA(Tyr). In Enterococcus faecalis (strain ATCC 700802 / V583), this protein is Tyrosine--tRNA ligase 1.